Consider the following 179-residue polypeptide: Large ribosomal subunit protein uL6 (179 aa).

Belongs to the universal ribosomal protein uL6 family. In terms of assembly, part of the 50S ribosomal subunit.

Its function is as follows. This protein binds to the 23S rRNA, and is important in its secondary structure. It is located near the subunit interface in the base of the L7/L12 stalk, and near the tRNA binding site of the peptidyltransferase center. The polypeptide is Large ribosomal subunit protein uL6 (Chloroherpeton thalassium (strain ATCC 35110 / GB-78)).